The primary structure comprises 157 residues: Ribosomal RNA large subunit methyltransferase H (157 aa).

Residues Leu-74, Gly-106, and 125 to 130 (LGNITF) each bind S-adenosyl-L-methionine.

It belongs to the RNA methyltransferase RlmH family. As to quaternary structure, homodimer.

The protein resides in the cytoplasm. The catalysed reaction is pseudouridine(1915) in 23S rRNA + S-adenosyl-L-methionine = N(3)-methylpseudouridine(1915) in 23S rRNA + S-adenosyl-L-homocysteine + H(+). In terms of biological role, specifically methylates the pseudouridine at position 1915 (m3Psi1915) in 23S rRNA. The polypeptide is Ribosomal RNA large subunit methyltransferase H (Lawsonia intracellularis (strain PHE/MN1-00)).